A 600-amino-acid polypeptide reads, in one-letter code: Probable pectin methyltransferase QUA3 (600 aa).

The Cytoplasmic portion of the chain corresponds to 1–18 (MGHVNLPASKRGNPRQWR). Residues 19–39 (LLDIVTAAFFGIVLLFFILLF) form a helical; Signal-anchor for type II membrane protein membrane-spanning segment. Residues 40–600 (TPLGDSMAAS…SLWKLPSNSH (561 aa)) are Lumenal-facing. N283 is a glycosylation site (N-linked (GlcNAc...) asparagine).

Belongs to the methyltransferase superfamily. In terms of tissue distribution, highly expressed and abundant in suspension-cultured cells, but low levels in seedlings.

Its subcellular location is the golgi apparatus membrane. It participates in glycan metabolism; pectin biosynthesis. Functionally, S-adenosyl-L-methionine (SAM)-dependent methyltransferase (MTase) which mediates the methylesterification of the pectin homogalacturonan (HG) and thus regulates cell wall biosynthesis, at least in suspension-cultured cells. This chain is Probable pectin methyltransferase QUA3, found in Arabidopsis thaliana (Mouse-ear cress).